Reading from the N-terminus, the 231-residue chain is Orotidine 5'-phosphate decarboxylase (231 aa).

Residues aspartate 12, lysine 34, 61–70 (DMKLLDIDNT), threonine 116, arginine 177, glutamine 186, glycine 206, and arginine 207 contribute to the substrate site. The active-site Proton donor is the lysine 63.

Belongs to the OMP decarboxylase family. Type 1 subfamily. As to quaternary structure, homodimer.

It catalyses the reaction orotidine 5'-phosphate + H(+) = UMP + CO2. It participates in pyrimidine metabolism; UMP biosynthesis via de novo pathway; UMP from orotate: step 2/2. In terms of biological role, catalyzes the decarboxylation of orotidine 5'-monophosphate (OMP) to uridine 5'-monophosphate (UMP). This Allorhizobium ampelinum (strain ATCC BAA-846 / DSM 112012 / S4) (Agrobacterium vitis (strain S4)) protein is Orotidine 5'-phosphate decarboxylase.